A 485-amino-acid polypeptide reads, in one-letter code: Aspartyl/glutamyl-tRNA(Asn/Gln) amidotransferase subunit B (485 aa).

It belongs to the GatB/GatE family. GatB subfamily. Heterotrimer of A, B and C subunits.

It catalyses the reaction L-glutamyl-tRNA(Gln) + L-glutamine + ATP + H2O = L-glutaminyl-tRNA(Gln) + L-glutamate + ADP + phosphate + H(+). The enzyme catalyses L-aspartyl-tRNA(Asn) + L-glutamine + ATP + H2O = L-asparaginyl-tRNA(Asn) + L-glutamate + ADP + phosphate + 2 H(+). In terms of biological role, allows the formation of correctly charged Asn-tRNA(Asn) or Gln-tRNA(Gln) through the transamidation of misacylated Asp-tRNA(Asn) or Glu-tRNA(Gln) in organisms which lack either or both of asparaginyl-tRNA or glutaminyl-tRNA synthetases. The reaction takes place in the presence of glutamine and ATP through an activated phospho-Asp-tRNA(Asn) or phospho-Glu-tRNA(Gln). The protein is Aspartyl/glutamyl-tRNA(Asn/Gln) amidotransferase subunit B of Methylacidiphilum infernorum (isolate V4) (Methylokorus infernorum (strain V4)).